The sequence spans 217 residues: 3,4-dihydroxy-2-butanone 4-phosphate synthase (217 aa).

Residues 37–38 (RE), Asp42, 150–154 (RGGHT), and Glu174 contribute to the D-ribulose 5-phosphate site. Glu38 provides a ligand contact to Mg(2+). His153 contributes to the Mg(2+) binding site.

Belongs to the DHBP synthase family. Homodimer. Mg(2+) serves as cofactor. Requires Mn(2+) as cofactor.

The enzyme catalyses D-ribulose 5-phosphate = (2S)-2-hydroxy-3-oxobutyl phosphate + formate + H(+). It functions in the pathway cofactor biosynthesis; riboflavin biosynthesis; 2-hydroxy-3-oxobutyl phosphate from D-ribulose 5-phosphate: step 1/1. Catalyzes the conversion of D-ribulose 5-phosphate to formate and 3,4-dihydroxy-2-butanone 4-phosphate. In Proteus mirabilis (strain HI4320), this protein is 3,4-dihydroxy-2-butanone 4-phosphate synthase.